The following is a 206-amino-acid chain: Imidazoleglycerol-phosphate dehydratase (206 aa).

This sequence belongs to the imidazoleglycerol-phosphate dehydratase family.

The protein resides in the cytoplasm. It carries out the reaction D-erythro-1-(imidazol-4-yl)glycerol 3-phosphate = 3-(imidazol-4-yl)-2-oxopropyl phosphate + H2O. Its pathway is amino-acid biosynthesis; L-histidine biosynthesis; L-histidine from 5-phospho-alpha-D-ribose 1-diphosphate: step 6/9. This is Imidazoleglycerol-phosphate dehydratase from Leptospira interrogans serogroup Icterohaemorrhagiae serovar copenhageni (strain Fiocruz L1-130).